A 393-amino-acid chain; its full sequence is Phosphopentomutase (393 aa).

6 residues coordinate Mn(2+): aspartate 11, aspartate 282, histidine 287, aspartate 323, histidine 324, and histidine 335.

This sequence belongs to the phosphopentomutase family. The cofactor is Mn(2+).

It is found in the cytoplasm. It carries out the reaction 2-deoxy-alpha-D-ribose 1-phosphate = 2-deoxy-D-ribose 5-phosphate. The catalysed reaction is alpha-D-ribose 1-phosphate = D-ribose 5-phosphate. Its pathway is carbohydrate degradation; 2-deoxy-D-ribose 1-phosphate degradation; D-glyceraldehyde 3-phosphate and acetaldehyde from 2-deoxy-alpha-D-ribose 1-phosphate: step 1/2. Its function is as follows. Isomerase that catalyzes the conversion of deoxy-ribose 1-phosphate (dRib-1-P) and ribose 1-phosphate (Rib-1-P) to deoxy-ribose 5-phosphate (dRib-5-P) and ribose 5-phosphate (Rib-5-P), respectively. This is Phosphopentomutase from Caldanaerobacter subterraneus subsp. tengcongensis (strain DSM 15242 / JCM 11007 / NBRC 100824 / MB4) (Thermoanaerobacter tengcongensis).